The primary structure comprises 516 residues: Ammonium transporter Amt1 (516 aa).

Helical transmembrane passes span 17-37, 59-79, 101-121, 130-150, 170-190, 214-234, 258-278, 286-306, 307-327, 342-362, and 374-394; these read YVWI…FALL, ALGV…VGGL, IDWL…SGAV, YVVF…GLTW, LDFA…LVGA, MLLA…FNVG, VALV…VVST, PLWM…AVPH, VTWW…LPAY, VFAV…VFAV, and VAGV…VFAA. The disordered stretch occupies residues 426–516; the sequence is IGESGPDRGV…SAAVDGGENQ (91 aa). Residues 445–491 show a composition bias toward basic and acidic residues; sequence NDVRTDGGNDVRTDGGNDVRTDGGNDVRTDGGNDVRTDGGNDVRTDG.

This sequence belongs to the ammonia transporter channel (TC 1.A.11.2) family. As to quaternary structure, homotrimer. Interacts with both GlnK1 and GlnK2 after ammonium shock. Interaction is rapid, reversible and dependent on nitrogen source.

It is found in the cell membrane. Its function is as follows. Involved in the uptake of ammonium/ammonia (NH(4)(+)/NH(3)). Transport is electrogenic. This Haloferax mediterranei (strain ATCC 33500 / DSM 1411 / JCM 8866 / NBRC 14739 / NCIMB 2177 / R-4) (Halobacterium mediterranei) protein is Ammonium transporter Amt1.